The sequence spans 433 residues: Enolase (433 aa).

Gln164 lines the (2R)-2-phosphoglycerate pocket. Glu206 (proton donor) is an active-site residue. Mg(2+) contacts are provided by Asp243, Glu289, and Asp316. Residues Lys341, Arg370, Ser371, and Lys392 each contribute to the (2R)-2-phosphoglycerate site. The active-site Proton acceptor is Lys341.

This sequence belongs to the enolase family. Mg(2+) serves as cofactor.

It localises to the cytoplasm. It is found in the secreted. The protein resides in the cell surface. The catalysed reaction is (2R)-2-phosphoglycerate = phosphoenolpyruvate + H2O. It participates in carbohydrate degradation; glycolysis; pyruvate from D-glyceraldehyde 3-phosphate: step 4/5. In terms of biological role, catalyzes the reversible conversion of 2-phosphoglycerate (2-PG) into phosphoenolpyruvate (PEP). It is essential for the degradation of carbohydrates via glycolysis. The polypeptide is Enolase (Borreliella afzelii (strain PKo) (Borrelia afzelii)).